A 47-amino-acid polypeptide reads, in one-letter code: Small, acid-soluble spore protein N (47 aa).

2 stretches are compositionally biased toward polar residues: residues 1–11 (MGNPKSNQQPF) and 29–47 (KQMQ…TKGE). Positions 1 to 47 (MGNPKSNQQPFVPQHIGTKPREAGGNKGKQMQDQSGQHPQVIQTKGE) are disordered.

It belongs to the SspN family.

It localises to the spore core. The protein is Small, acid-soluble spore protein N of Anoxybacillus flavithermus (strain DSM 21510 / WK1).